Reading from the N-terminus, the 562-residue chain is Calcium-dependent protein kinase 5 (562 aa).

The Protein kinase domain occupies 118 to 372 (ELDKYKLGKG…VHKIVNHKWF (255 aa)). ATP is bound by residues 124–132 (LGKGSYGNV) and Lys147. Asp238 acts as the Proton acceptor in catalysis. The short motif at 394 to 402 (KFKKFHKLC) is the J domain autoinhibitory motif element. The segment at 394-429 (KFKKFHKLCKIKKLAITCIAYQLNKKKFGKMKKTFE) is j domain. Residues 403 to 412 (KIKKLAITCI) carry the J domain EF-hand interaction motif motif. 4 consecutive EF-hand domains span residues 419–453 (KKFG…VGDN), 454–489 (EIDR…HSIL), 490–525 (EQDA…SNDQ), and 528–562 (FSKE…GRQS). Residues Asp432, Asn434, Asp436, Glu443, Asp467, Asp469, Asn471, Glu478, Asp503, Asn505, Asp507, Glu514, Asp541, Asn543, Asp545, Tyr547, and Glu552 each contribute to the Ca(2+) site.

This sequence belongs to the protein kinase superfamily. Ser/Thr protein kinase family. CDPK subfamily. It depends on Mg(2+) as a cofactor. May be palmitoylated. Post-translationally, autophosphorylated in vitro.

It localises to the cytoplasm. The protein resides in the cytoplasmic vesicle. The protein localises to the secretory vesicle. It is found in the microneme membrane. Its subcellular location is the cell membrane. The enzyme catalyses L-seryl-[protein] + ATP = O-phospho-L-seryl-[protein] + ADP + H(+). The catalysed reaction is L-threonyl-[protein] + ATP = O-phospho-L-threonyl-[protein] + ADP + H(+). Activated by calcium. Upon calcium binding to the EF-hand domains, the C-terminus of the junction domain (J domain) undergoes a conformational change which results in the dissociation of the pseudo-substrate inhibitory motif from the catalytic domain. This, in turn, may facilitate the autophosphorylation of the activation loop at Thr-278, which leads to the kinase activation. Its function is as follows. Calcium-dependent protein kinase which acts as a sensor and effector of intracellular Ca(2+) levels probably in part downstream of cGMP-activated PKG kinase. Plays a central role in host erythrocytes and hepatocytes infection cycles. During the liver stage, involved in sporozoite motility and thus in sporozoite invasion of host hepatocytes, probably together with CDPK1 and CDPK4. Involved in merosome egress from host hepatocytes, probably together with CDPK4. Required for the release of hepatic merozoites from merosomes in the host blood stream. During the asexual blood stage, required for merozoite egress from host erythrocytes by triggering microneme secretion. Phosphorylates transporter NPT1 at late schizont stage. The sequence is that of Calcium-dependent protein kinase 5 from Plasmodium berghei (strain Anka).